A 99-amino-acid chain; its full sequence is Large ribosomal subunit protein uL23 (99 aa).

It belongs to the universal ribosomal protein uL23 family. As to quaternary structure, part of the 50S ribosomal subunit. Contacts protein L29, and trigger factor when it is bound to the ribosome.

One of the early assembly proteins it binds 23S rRNA. One of the proteins that surrounds the polypeptide exit tunnel on the outside of the ribosome. Forms the main docking site for trigger factor binding to the ribosome. The protein is Large ribosomal subunit protein uL23 of Synechococcus sp. (strain JA-2-3B'a(2-13)) (Cyanobacteria bacterium Yellowstone B-Prime).